The primary structure comprises 603 residues: MRLSQQLFVTLREDPAEAEIPSHKCLVRAGYIRRIGSGIYAYLPLMWRVLQKVSQIVREEMNKAGAQECLLPQLQPAELWQESGRWDTYTKAEGIMFALTDRQNRELGLGPTHEEVITAVARDLIRSYRQLPVNLYQIQTKFRDEIRPRFGLMRGREFIMKDAYSFNLDEECLKKTYQAMDIAYRNIFRRCGLAFRAVEADSGAIGGSASQEFMVLADAGEDEVLFTADEKYAANVEKAVSLPADKVASPFKKFAKKETPNTNTIESLAKFLDCAATAIVKNVLYEVVYDSGITVLVLVSIRGDQEVNEVKLQNELVRQASRYNAKTILALKIPDAAAQQKWATKPLPLGYIGPDLEDNLLKKASDIAPQFLRIADNTVTDLENLITGANETGFHLVGANWGKDFILPELIVDLRKAQVGDRAIHDPNQTLQSARGIEVGHIFQLGYKYSQAMNAFYTNEAGESTPICMGCYGIGVSRLAQAAVEQSYDKDGIIWPVAIAPYQAIVVIPNLADAEQVKTAESLYNELNQAGIETLLDDRDERAGVKFKDADLIGIPYRIVTGKSLKSGKVELVERASKKASEVAINEVVSYLKTAISKVNASD.

It belongs to the class-II aminoacyl-tRNA synthetase family. ProS type 1 subfamily. Homodimer.

It is found in the cytoplasm. The catalysed reaction is tRNA(Pro) + L-proline + ATP = L-prolyl-tRNA(Pro) + AMP + diphosphate. In terms of biological role, catalyzes the attachment of proline to tRNA(Pro) in a two-step reaction: proline is first activated by ATP to form Pro-AMP and then transferred to the acceptor end of tRNA(Pro). As ProRS can inadvertently accommodate and process non-cognate amino acids such as alanine and cysteine, to avoid such errors it has two additional distinct editing activities against alanine. One activity is designated as 'pretransfer' editing and involves the tRNA(Pro)-independent hydrolysis of activated Ala-AMP. The other activity is designated 'posttransfer' editing and involves deacylation of mischarged Ala-tRNA(Pro). The misacylated Cys-tRNA(Pro) is not edited by ProRS. The sequence is that of Proline--tRNA ligase from Microcystis aeruginosa (strain NIES-843 / IAM M-2473).